Here is a 458-residue protein sequence, read N- to C-terminus: Cysteine--tRNA ligase (458 aa).

Residue cysteine 28 coordinates Zn(2+). A 'HIGH' region motif is present at residues 30–40; that stretch reads VTVYDLCHFGH. Zn(2+)-binding residues include cysteine 209, histidine 234, and glutamate 238. The short motif at 266–270 is the 'KMSKS' region element; sequence KMSKS. Lysine 269 contacts ATP.

This sequence belongs to the class-I aminoacyl-tRNA synthetase family. In terms of assembly, monomer. It depends on Zn(2+) as a cofactor.

The protein resides in the cytoplasm. It carries out the reaction tRNA(Cys) + L-cysteine + ATP = L-cysteinyl-tRNA(Cys) + AMP + diphosphate. This Mannheimia succiniciproducens (strain KCTC 0769BP / MBEL55E) protein is Cysteine--tRNA ligase.